A 264-amino-acid chain; its full sequence is Major prion protein (264 aa).

The first 24 residues, 1-24 (MVKSHIGSWILVLFVAMWSDVGLC), serve as a signal peptide directing secretion. The segment at 25–241 (KKRPKPGGGW…ESQAYYQRGA (217 aa)) is interaction with GRB2, ERI3 and SYN1. A disordered region spans residues 28–119 (PKPGGGWNTG…WNKPSKPKTN (92 aa)). 6 consecutive repeat copies span residues 54–62 (PQGGGGWGQ), 63–70 (PHGGGWGQ), 71–78 (PHGGGWGQ), 79–86 (PHGGGWGQ), 87–94 (PHGGGWGQ), and 95–103 (PHGGGGWGQ). A 6 X 8 AA tandem repeats of P-H-G-G-G-W-G-Q region spans residues 54–103 (PQGGGGWGQPHGGGWGQPHGGGWGQPHGGGWGQPHGGGWGQPHGGGGWGQ). The span at 55 to 105 (QGGGGWGQPHGGGWGQPHGGGWGQPHGGGWGQPHGGGWGQPHGGGGWGQGG) shows a compositional bias: gly residues. The Cu(2+) site is built by histidine 72, glycine 73, glycine 74, histidine 80, glycine 81, glycine 82, histidine 88, glycine 89, glycine 90, histidine 96, glycine 98, and glycine 99. Residues cysteine 190 and cysteine 225 are joined by a disulfide bond. Residues asparagine 192 and asparagine 208 are each glycosylated (N-linked (GlcNAc...) asparagine). Alanine 241 carries the GPI-anchor amidated alanine lipid modification. Residues 242–264 (SVILFSSPPVILLISFLIFLIVG) constitute a propeptide, removed in mature form.

Belongs to the prion family. In terms of assembly, monomer and homodimer. Has a tendency to aggregate into amyloid fibrils containing a cross-beta spine, formed by a steric zipper of superposed beta-strands. Soluble oligomers may represent an intermediate stage on the path to fibril formation. Copper binding may promote oligomerization. Interacts with GRB2, APP, ERI3/PRNPIP and SYN1. Mislocalized cytosolically exposed PrP interacts with MGRN1; this interaction alters MGRN1 subcellular location and causes lysosomal enlargement. Interacts with KIAA1191.

The protein resides in the cell membrane. The protein localises to the golgi apparatus. Its function is as follows. Its primary physiological function is unclear. Has cytoprotective activity against internal or environmental stresses. May play a role in neuronal development and synaptic plasticity. May be required for neuronal myelin sheath maintenance. May play a role in iron uptake and iron homeostasis. Soluble oligomers are toxic to cultured neuroblastoma cells and induce apoptosis (in vitro). Association with GPC1 (via its heparan sulfate chains) targets PRNP to lipid rafts. Also provides Cu(2+) or Zn(2+) for the ascorbate-mediated GPC1 deaminase degradation of its heparan sulfate side chains. The chain is Major prion protein (PRNP) from Antilope cervicapra (Blackbuck).